The primary structure comprises 491 residues: Ketol-acid reductoisomerase (NADP(+)) (491 aa).

The region spanning 16 to 207 (IKKCRFMKEN…GGHRAGVLES (192 aa)) is the KARI N-terminal Rossmann domain. NADP(+)-binding positions include 44-47 (CGSQ), K67, S77, and 107-109 (DKQ). Residue H131 is part of the active site. G157 lines the NADP(+) pocket. KARI C-terminal knotted domains lie at 208 to 344 (SFIA…NILS) and 345 to 484 (YSEK…MKEM). Residues D216, E220, E389, and E393 each contribute to the Mg(2+) site. Residue S414 coordinates substrate.

The protein belongs to the ketol-acid reductoisomerase family. The cofactor is Mg(2+).

It catalyses the reaction (2R)-2,3-dihydroxy-3-methylbutanoate + NADP(+) = (2S)-2-acetolactate + NADPH + H(+). The catalysed reaction is (2R,3R)-2,3-dihydroxy-3-methylpentanoate + NADP(+) = (S)-2-ethyl-2-hydroxy-3-oxobutanoate + NADPH + H(+). The protein operates within amino-acid biosynthesis; L-isoleucine biosynthesis; L-isoleucine from 2-oxobutanoate: step 2/4. It functions in the pathway amino-acid biosynthesis; L-valine biosynthesis; L-valine from pyruvate: step 2/4. Its function is as follows. Involved in the biosynthesis of branched-chain amino acids (BCAA). Catalyzes an alkyl-migration followed by a ketol-acid reduction of (S)-2-acetolactate (S2AL) to yield (R)-2,3-dihydroxy-isovalerate. In the isomerase reaction, S2AL is rearranged via a Mg-dependent methyl migration to produce 3-hydroxy-3-methyl-2-ketobutyrate (HMKB). In the reductase reaction, this 2-ketoacid undergoes a metal-dependent reduction by NADPH to yield (R)-2,3-dihydroxy-isovalerate. This chain is Ketol-acid reductoisomerase (NADP(+)), found in Buchnera aphidicola subsp. Schizaphis graminum (strain Sg).